The following is a 559-amino-acid chain: Asparagine--tRNA ligase, cytoplasmic (559 aa).

Ser-72 bears the Phosphoserine mark. N6-acetyllysine is present on residues Lys-255 and Lys-501.

This sequence belongs to the class-II aminoacyl-tRNA synthetase family.

It is found in the cytoplasm. It carries out the reaction tRNA(Asn) + L-asparagine + ATP = L-asparaginyl-tRNA(Asn) + AMP + diphosphate + H(+). This is Asparagine--tRNA ligase, cytoplasmic (NARS) from Bos taurus (Bovine).